Reading from the N-terminus, the 195-residue chain is Matrix protein (195 aa).

Belongs to the novirhabdovirus matrix protein family. In terms of assembly, homomultimer.

It localises to the virion. Its subcellular location is the host cytoplasm. The M protein has a crucial role in virus assembly and interacts with the RNP complex as well as with the viral membrane. This is Matrix protein (M) from Salmo (IHNV).